A 421-amino-acid polypeptide reads, in one-letter code: Medium-chain specific acyl-CoA dehydrogenase, mitochondrial (421 aa).

Residues 1-25 constitute a mitochondrion transit peptide; the sequence is MAAGFGRCCRVLRSISRFQWRSQHT. Residue K69 is modified to N6-acetyllysine; alternate. An N6-succinyllysine; alternate modification is found at K69. Residue 158–167 participates in FAD binding; the sequence is YCVTEPGAGS. S167 contacts octanoyl-CoA. K179 carries the N6-succinyllysine modification. 191–193 is an FAD binding site; the sequence is WIT. K212, K217, and K271 each carry N6-acetyllysine; alternate. N6-succinyllysine; alternate occurs at positions 212, 217, and 271. An octanoyl-CoA-binding site is contributed by D278. K279 is modified (N6-acetyllysine). R281 serves as a coordination point for octanoyl-CoA. K301 carries the N6-acetyllysine modification. FAD contacts are provided by residues 306-308 and 316-317; these read RKT and HQ. Octanoyl-CoA-binding residues include R349 and T351. Position 351 is a phosphothreonine (T351). 374 to 378 serves as a coordination point for FAD; it reads QILGG. E401 is an octanoyl-CoA binding site. The active-site Proton acceptor is E401. Position 402 to 405 (402 to 405) interacts with FAD; sequence GTSQ.

It belongs to the acyl-CoA dehydrogenase family. As to quaternary structure, homotetramer. Interacts with the heterodimeric electron transfer flavoprotein ETF. FAD is required as a cofactor. Acetylated. Could occur at proximity of the cofactor-binding sites and reduce the catalytic activity. Could be deacetylated by SIRT3.

It localises to the mitochondrion matrix. It carries out the reaction a medium-chain 2,3-saturated fatty acyl-CoA + oxidized [electron-transfer flavoprotein] + H(+) = a medium-chain (2E)-enoyl-CoA + reduced [electron-transfer flavoprotein]. The enzyme catalyses pentanoyl-CoA + oxidized [electron-transfer flavoprotein] + H(+) = (2E)-pentenoyl-CoA + reduced [electron-transfer flavoprotein]. The catalysed reaction is hexanoyl-CoA + oxidized [electron-transfer flavoprotein] + H(+) = (2E)-hexenoyl-CoA + reduced [electron-transfer flavoprotein]. It catalyses the reaction octanoyl-CoA + oxidized [electron-transfer flavoprotein] + H(+) = (2E)-octenoyl-CoA + reduced [electron-transfer flavoprotein]. It carries out the reaction decanoyl-CoA + oxidized [electron-transfer flavoprotein] + H(+) = (2E)-decenoyl-CoA + reduced [electron-transfer flavoprotein]. The enzyme catalyses dodecanoyl-CoA + oxidized [electron-transfer flavoprotein] + H(+) = (2E)-dodecenoyl-CoA + reduced [electron-transfer flavoprotein]. The catalysed reaction is tetradecanoyl-CoA + oxidized [electron-transfer flavoprotein] + H(+) = (2E)-tetradecenoyl-CoA + reduced [electron-transfer flavoprotein]. It catalyses the reaction oxidized [electron-transfer flavoprotein] + hexadecanoyl-CoA + H(+) = (2E)-hexadecenoyl-CoA + reduced [electron-transfer flavoprotein]. The protein operates within lipid metabolism; mitochondrial fatty acid beta-oxidation. Functionally, medium-chain specific acyl-CoA dehydrogenase is one of the acyl-CoA dehydrogenases that catalyze the first step of mitochondrial fatty acid beta-oxidation, an aerobic process breaking down fatty acids into acetyl-CoA and allowing the production of energy from fats. The first step of fatty acid beta-oxidation consists in the removal of one hydrogen from C-2 and C-3 of the straight-chain fatty acyl-CoA thioester, resulting in the formation of trans-2-enoyl-CoA. Electron transfer flavoprotein (ETF) is the electron acceptor that transfers electrons to the main mitochondrial respiratory chain via ETF-ubiquinone oxidoreductase (ETF dehydrogenase). Among the different mitochondrial acyl-CoA dehydrogenases, medium-chain specific acyl-CoA dehydrogenase acts specifically on acyl-CoAs with saturated 6 to 12 carbons long primary chains. The chain is Medium-chain specific acyl-CoA dehydrogenase, mitochondrial from Pan troglodytes (Chimpanzee).